A 660-amino-acid polypeptide reads, in one-letter code: Arginine--tRNA ligase, cytoplasmic (660 aa).

The interval 1–72 is could be involved in the assembly of the multisynthetase complex; that stretch reads MELPVCFYEE…LEEKKKSSKS (72 aa). L-arginine-binding positions include 200 to 202, histidine 211, tyrosine 384, aspartate 388, and glutamine 412; that span reads SPN. The 'HIGH' region motif lies at 201–212; sequence PNIAKEMHVGHL. Residues 529 to 543 are interaction with tRNA; it reads NTAAYLLYAYTRIRS.

It belongs to the class-I aminoacyl-tRNA synthetase family. As to quaternary structure, monomer; also part of a multisubunit complex that groups tRNA ligases for Arg, Asp, Glu, Gln, Ile, Leu, Lys, Met and Pro.

It localises to the cytoplasm. The protein localises to the cytosol. It catalyses the reaction tRNA(Arg) + L-arginine + ATP = L-arginyl-tRNA(Arg) + AMP + diphosphate. Its function is as follows. Forms part of a macromolecular complex that catalyzes the attachment of specific amino acids to cognate tRNAs during protein synthesis. The chain is Arginine--tRNA ligase, cytoplasmic (rars1) from Xenopus tropicalis (Western clawed frog).